The sequence spans 431 residues: tRNA(Ile)-lysidine synthase (431 aa).

19-24 contacts ATP; it reads STGIDS.

Belongs to the tRNA(Ile)-lysidine synthase family.

Its subcellular location is the cytoplasm. The catalysed reaction is cytidine(34) in tRNA(Ile2) + L-lysine + ATP = lysidine(34) in tRNA(Ile2) + AMP + diphosphate + H(+). Ligates lysine onto the cytidine present at position 34 of the AUA codon-specific tRNA(Ile) that contains the anticodon CAU, in an ATP-dependent manner. Cytidine is converted to lysidine, thus changing the amino acid specificity of the tRNA from methionine to isoleucine. The protein is tRNA(Ile)-lysidine synthase of Staphylococcus aureus (strain MRSA252).